We begin with the raw amino-acid sequence, 246 residues long: Large ribosomal subunit protein uL3 (246 aa).

Gln-151 carries the N5-methylglutamine modification.

The protein belongs to the universal ribosomal protein uL3 family. In terms of assembly, part of the 50S ribosomal subunit. Forms a cluster with proteins L14 and L19. Post-translationally, methylated by PrmB.

Its function is as follows. One of the primary rRNA binding proteins, it binds directly near the 3'-end of the 23S rRNA, where it nucleates assembly of the 50S subunit. This Bartonella quintana (strain Toulouse) (Rochalimaea quintana) protein is Large ribosomal subunit protein uL3.